The sequence spans 281 residues: Oxidoreductase-like protein SRL4 (281 aa).

NADP(+) is bound by residues Leu-39, Thr-60, Lys-67, Lys-152, and Lys-197. Lys-197 (lowers pKa of active site Tyr) is an active-site residue.

The protein belongs to the short-chain dehydrogenases/reductases (SDR) family.

May be involved in the regulation of dNTP production. Induces the SOS system when expressed in E.coli, therefore, it may play a role in DNA metabolism and/or in genome stability. The sequence is that of Oxidoreductase-like protein SRL4 (SRL4) from Saccharomyces cerevisiae (strain ATCC 204508 / S288c) (Baker's yeast).